The sequence spans 409 residues: DNA polymerase IV 2 (409 aa).

One can recognise a UmuC domain in the interval 5-190 (IFMVDMESFF…LPIECLYGVG (186 aa)). 2 residues coordinate Mg(2+): Asp9 and Asp105. Glu106 is an active-site residue.

It belongs to the DNA polymerase type-Y family. As to quaternary structure, monomer. Mg(2+) serves as cofactor.

It is found in the cytoplasm. It catalyses the reaction DNA(n) + a 2'-deoxyribonucleoside 5'-triphosphate = DNA(n+1) + diphosphate. Functionally, poorly processive, error-prone DNA polymerase involved in untargeted mutagenesis. Copies undamaged DNA at stalled replication forks, which arise in vivo from mismatched or misaligned primer ends. These misaligned primers can be extended by PolIV. Exhibits no 3'-5' exonuclease (proofreading) activity. May be involved in translesional synthesis, in conjunction with the beta clamp from PolIII. This Halalkalibacterium halodurans (strain ATCC BAA-125 / DSM 18197 / FERM 7344 / JCM 9153 / C-125) (Bacillus halodurans) protein is DNA polymerase IV 2 (dinB2).